Consider the following 293-residue polypeptide: ATP synthase gamma chain (293 aa).

It belongs to the ATPase gamma chain family. In terms of assembly, F-type ATPases have 2 components, CF(1) - the catalytic core - and CF(0) - the membrane proton channel. CF(1) has five subunits: alpha(3), beta(3), gamma(1), delta(1), epsilon(1). CF(0) has three main subunits: a, b and c.

It localises to the cell inner membrane. Its function is as follows. Produces ATP from ADP in the presence of a proton gradient across the membrane. The gamma chain is believed to be important in regulating ATPase activity and the flow of protons through the CF(0) complex. The protein is ATP synthase gamma chain of Sinorhizobium fredii (strain NBRC 101917 / NGR234).